Consider the following 250-residue polypeptide: Testis-expressed protein 101 (250 aa).

The first 25 residues, 1–25, serve as a signal peptide directing secretion; it reads MGACRIQYVLLIFLLIASRWTLVQN. N-linked (GlcNAc...) asparagine glycosylation is found at Asn-45, Asn-110, Asn-134, and Asn-160. Residues 141 to 215 form the UPAR/Ly6 domain; it reads CPTCVALGSC…VKETCSYQSF (75 aa). The GPI-anchor amidated glycine moiety is linked to residue Gly-224. Positions 225 to 250 are cleaved as a propeptide — removed in mature form; it reads ASQMPTSLWVLELLFPLLLLPLTHFP.

Interacts with VAMP3. Interacts with LY6K. Interacts with DPEP3; co-localized on the cell surface of spermatocytes, spermatids, and testicular spermatozoa, co-localized only in cytoplasmic droplets of caput and corpus epididymal sperm. Interacts with ADAM3; co-localized on sperm surface. Interacts with ADAM5. N-glycosylated; by high mannose and/or biantennary complex and/or certain types of hybrid oligosaccharides; possesses different oligosaccharides chains according to its subcellular localization in the testis. In terms of processing, sheds from membrane raft by ACE and released from the cell surface of epididymal sperm while it passes through the caput epididymis leading to disappearance of TEX101 on spermatozoa; is essential to produce fertile spermatozoa. In terms of tissue distribution, detected in testis and ovary. Expressed in spermatocytes, spermatids and testicular spermatozoa, but not in spermatogonia or interstitial cells. Expressed abundantly in testicular germ cells (TGCs) but mostly disappeared from epididymal spermatozoa.

The protein resides in the cell membrane. It is found in the membrane raft. Its subcellular location is the cytoplasmic vesicle. The protein localises to the secretory vesicle. It localises to the acrosome. The protein resides in the secreted. Its function is as follows. Plays a role in fertilization by controlling binding of sperm to zona pellucida and migration of spermatozoa into the oviduct probably through molecule adhesion ADAM3. May play a role in signal transduction and promote protein tyrosine phosphorylation. The protein is Testis-expressed protein 101 of Mus musculus (Mouse).